Consider the following 379-residue polypeptide: Queuine tRNA-ribosyltransferase (379 aa).

Residue aspartate 94 is the Proton acceptor of the active site. Substrate-binding positions include aspartate 94–phenylalanine 98, aspartate 148, glutamine 191, and glycine 218. The interval glycine 249–serine 255 is RNA binding. The active-site Nucleophile is the aspartate 268. The tract at residues threonine 273–arginine 277 is RNA binding; important for wobble base 34 recognition. Zn(2+)-binding residues include cysteine 306, cysteine 308, cysteine 311, and histidine 337.

This sequence belongs to the queuine tRNA-ribosyltransferase family. As to quaternary structure, homodimer. Within each dimer, one monomer is responsible for RNA recognition and catalysis, while the other monomer binds to the replacement base PreQ1. Zn(2+) is required as a cofactor.

It catalyses the reaction 7-aminomethyl-7-carbaguanine + guanosine(34) in tRNA = 7-aminomethyl-7-carbaguanosine(34) in tRNA + guanine. Its pathway is tRNA modification; tRNA-queuosine biosynthesis. Functionally, catalyzes the base-exchange of a guanine (G) residue with the queuine precursor 7-aminomethyl-7-deazaguanine (PreQ1) at position 34 (anticodon wobble position) in tRNAs with GU(N) anticodons (tRNA-Asp, -Asn, -His and -Tyr). Catalysis occurs through a double-displacement mechanism. The nucleophile active site attacks the C1' of nucleotide 34 to detach the guanine base from the RNA, forming a covalent enzyme-RNA intermediate. The proton acceptor active site deprotonates the incoming PreQ1, allowing a nucleophilic attack on the C1' of the ribose to form the product. After dissociation, two additional enzymatic reactions on the tRNA convert PreQ1 to queuine (Q), resulting in the hypermodified nucleoside queuosine (7-(((4,5-cis-dihydroxy-2-cyclopenten-1-yl)amino)methyl)-7-deazaguanosine). This chain is Queuine tRNA-ribosyltransferase, found in Listeria innocua serovar 6a (strain ATCC BAA-680 / CLIP 11262).